The chain runs to 480 residues: Cysteine--tRNA ligase (480 aa).

Position 29 (cysteine 29) interacts with Zn(2+). Residues proline 31 to histidine 41 carry the 'HIGH' region motif. Cysteine 221, histidine 246, and glutamate 250 together coordinate Zn(2+). A 'KMSKS' region motif is present at residues lysine 278–serine 282. Lysine 281 provides a ligand contact to ATP.

The protein belongs to the class-I aminoacyl-tRNA synthetase family. As to quaternary structure, monomer. Zn(2+) is required as a cofactor.

Its subcellular location is the cytoplasm. It carries out the reaction tRNA(Cys) + L-cysteine + ATP = L-cysteinyl-tRNA(Cys) + AMP + diphosphate. The polypeptide is Cysteine--tRNA ligase (Chlorobium chlorochromatii (strain CaD3)).